A 244-amino-acid chain; its full sequence is 7-cyano-7-deazaguanine synthase (244 aa).

ATP is bound at residue 14-24 (FSGGQDSATCV). Residues Cys202, Cys217, Cys220, and Cys223 each contribute to the Zn(2+) site.

This sequence belongs to the QueC family. Zn(2+) serves as cofactor.

It catalyses the reaction 7-carboxy-7-deazaguanine + NH4(+) + ATP = 7-cyano-7-deazaguanine + ADP + phosphate + H2O + H(+). It functions in the pathway purine metabolism; 7-cyano-7-deazaguanine biosynthesis. Its function is as follows. Catalyzes the ATP-dependent conversion of 7-carboxy-7-deazaguanine (CDG) to 7-cyano-7-deazaguanine (preQ(0)). The sequence is that of 7-cyano-7-deazaguanine synthase from Burkholderia thailandensis (strain ATCC 700388 / DSM 13276 / CCUG 48851 / CIP 106301 / E264).